The following is a 1581-amino-acid chain: MEEYGDMFGDINLTIGMLSKEDNISKEDIYCHLTSFIQNTDIMDDAIVQRLIYYTSKDMRDEEIPRELRMLAGEVLVSLAAHDFNSVMYEVQSNFRILELPNEFVVLALAELATSYVSQSIPFMMMTLLTMQTMLRLVEDENMRQTFCIALENFSKSIYKYVNHWKDFPYPKLDANRLSDKIFMLFRYIMEKWAPQASPMHALAIIKAHGPTVSLLLHREDFCEFALSQISWLLLQYRDKENDFYITQSLKQILTAAVLYDIALPKNLRRSVLSSLLHQICKVPEPPIKENKLEASSCFLILAHANPVDLLDFFDEQIRSTNEAVRTGILTLLRSTINAEEPKFRNHTTSIEKTVKLVMGDLSVKVRKSTLLLIQTMCEKGYIEAREGWPLIDYIFSQFAMSNRNLENPIKSNSQEDENGEKSVQETSLEVLKSLDPLVIGMPQVLWPRILTYVVPKEYTGTLDYLFNIIRILIMAEEKKKRDIQESTALVVSTGAVKLPSPQQLLARLLVISILASLGQLCGAGAIGLLKIMPEIIHPKLAEMWKTRMPALLQPLEGSNASIVLWETMLLQLLKESLWKISDVAWTSQLSRDFSLQMGSYSNSSMEKKFLWKALGTTLASCQDKDFVSSQINEFLVTPSLLGDHRQGTTSILGFCAENHLDIVLNVLKTFQDKEKFFVNRCKGIFSGKKSLTKTDLILIYGAVALHAPKQQLLARLDQDIMGQILLLYGQCCQILGVSVINKDMDLQMSFTRSITEVGIAVQDAEDQKFQFTYKEMLIGSMLDLIKDEPLNTLASPVRWKVLIAIRYLSKLKPALSLNDHLNILEENIRRLLPLPPLEKLKSQGETDKDRERIEFLYERSMDALGKLLRSMIWDNTDAQNCEEMFNLLRMWLVSQKQWERERAFQVTSKVLTKDVEAPQNFRIGSLLGLLAPHSCDTLPTIRQAATSSTIGLLCAKGICQEVDRLQGLQEGLDSEDEQVQIKISSKIAKIVCKFIPSEEIQVFLEETLDGLETLDPLCTKACGIWMIAALKEHGALLEDQLLEILSTIYHHMPVLRQKEESFQFMLEAISQIASFHMDAVVNNLLQKPLPFDRDTKTLWKALAENPASSGKLMRALIKKLVARLEDDIAGTEAISVACAIYEVILTGAHITHLYPELFTLLLKLVSCSLGQKMPMSTLSQRRRVMQLGERQRFPDPCRLSTATLKCLQAQAMREGLAKESDEGDNLWTLLSNPDTHHIGVCALARSMAVWQHGVILDIMEHLLSSLTSSSENYRITGMAFFSELMKEPILWKHGNLRDVLIFMDQNARDSNAILRQMAIRGLGNTACGAPHKVRKYKQMMLECIIRGLYHLARTEVVCESLKALKKILELLTERDINFYFKEIVLQTRTFFEDEQDDVRLTAISLFEDLATLTGRRWKIFFAEEVKKSMISFLLHLWDPNPKIGAACRDVLVICIPFLGLQELYGLLDHLLERDLPRARDFYRQLCMKLSKKNQEILWILHTHSFTFFTSSWEMIRSAAVKLTDAIILHLTKRYVELLDREQLTMRLQALRQDPCISVQRAAEATLQTLLRRCKEISIPL.

HEAT repeat units follow at residues Phe-123–Lys-160, Ala-305–Pro-342, Met-401–Gly-441, Asp-464–Ser-501, Ala-526–Glu-543, Met-544–Lys-580, Glu-658–Thr-695, Thr-773–Ala-815, Cys-960–Pro-997, Pro-1017–Val-1055, Lys-1112–His-1150, His-1153–Arg-1191, Gly-1254–Leu-1291, Gly-1295–His-1332, Cys-1359–Phe-1379, and Tyr-1380–Arg-1416.

Found in a complex at least composed of MROH2B isoform 2, PRKACA isoform 2 and TCP11. Interacts with PRKACA isoform 2. Interacts with TCP11. Post-translationally, constitutively phosphorylated on serine and threonine residues in acrosomal region of the sperm head, midpiece and flagellar regions of noncapacitated spermatozoa. Phosphorylation on tyrosine residues increases upon sperm capacitation within the acrosomal and tail regions in a protein kinase A (PKA)-dependent signaling pathway. In terms of tissue distribution, expressed strongly in round spermatids and fully mature spermatozoa. Expressed weakly in pachytene spermatocytes (at protein level). Isoform 2 is specifically expressed in the testis. Isoform 2 is expressed in pachytene spermatocytes and round spermatids. Isoform 3 is weakly expressed in testis.

It localises to the cytoplasm. The protein localises to the cytoplasmic vesicle. The protein resides in the secretory vesicle. It is found in the acrosome. Its subcellular location is the cell projection. It localises to the cilium. The protein localises to the flagellum. In terms of biological role, may play a role in the process of sperm capacitation. This is Maestro heat-like repeat-containing protein family member 2B from Mus musculus (Mouse).